Consider the following 388-residue polypeptide: Amylovoran biosynthesis protein AmsL (388 aa).

Helical transmembrane passes span 24 to 44 (VLLS…ISWF), 47 to 67 (LPQL…LGSL), 97 to 117 (FTVI…LGLF), 231 to 251 (FVIM…SPVI), 297 to 317 (FYWN…VWIW), and 359 to 379 (ISVS…NLFI).

It belongs to the polysaccharide synthase family.

It localises to the cell membrane. It functions in the pathway glycan metabolism; exopolysaccharide biosynthesis. Functionally, involved in the biosynthesis of amylovoran which functions as a virulence factor. This Erwinia amylovora (Fire blight bacteria) protein is Amylovoran biosynthesis protein AmsL (amsL).